The following is a 215-amino-acid chain: Probable transaldolase (215 aa).

Lys83 functions as the Schiff-base intermediate with substrate in the catalytic mechanism.

Belongs to the transaldolase family. Type 3B subfamily.

It localises to the cytoplasm. The enzyme catalyses D-sedoheptulose 7-phosphate + D-glyceraldehyde 3-phosphate = D-erythrose 4-phosphate + beta-D-fructose 6-phosphate. It participates in carbohydrate degradation; pentose phosphate pathway; D-glyceraldehyde 3-phosphate and beta-D-fructose 6-phosphate from D-ribose 5-phosphate and D-xylulose 5-phosphate (non-oxidative stage): step 2/3. In terms of biological role, transaldolase is important for the balance of metabolites in the pentose-phosphate pathway. This chain is Probable transaldolase, found in Methanococcus vannielii (strain ATCC 35089 / DSM 1224 / JCM 13029 / OCM 148 / SB).